Consider the following 607-residue polypeptide: MGDVRTQLTPETPGRAAILNPFESPSDYCSLHEPFVSSPSVFKPSKSAATPQQFRWSIDQLAAINPIEIDAEDIHRQALYLSRAKTDKETEERRQKAIEEFFTKRTIVPSPWTQHEGKPAAPFHSTKCADLIHESPVGRVQAVQSGKSTVGCQTHLSLPVDFNLEKVLGEYFRAEETADQSQDNLSSSSLRRKLFLDGHASGSECSSPSSPPQEGPYYDPPAALGVLCSIDLSPVRCRSPTQTPSSGQFSSSPIQGGRRAFSLGSITSPTFLEKSPASVTSPSFSPIAINLGKTPDAEQKRLIFPSPETLSASTSMVNAFTRNPYIEGCSPIKSIFQIKSRSCRGNAPHRTSLFQIPFALEPHSDDKENSPPSSIKSPEGDLSSLFHQLENIVPDGHVMMGGEPIVSPTVYMQQEYLQSEELKENDTVEMVEPVEIEEEHSWPKETVATDNIPMASFMTGITFSGESSHMCMSPLAESSVIPCENSSIQVDSGYNTQTYGSCIMDGIGAETTYKENDTHISDIQNKCQHFKVKDISSVDCKNQLLEPESPEFQHSTQKSQNKLARYSLNSGMWKLTGDGAINRLNKNGGVQSPPRTLNPKSLSHFLQ.

Disordered regions lie at residues 362–381 and 584–607; these read PHSD…PEGD and LNKN…HFLQ.

It belongs to the BORA family.

Required for the activation of aurka at the onset of mitosis. The protein is Protein aurora borealis (bora) of Xenopus laevis (African clawed frog).